Here is a 75-residue protein sequence, read N- to C-terminus: Cytochrome c oxidase subunit 6C (75 aa).

Residues 1–13 (MASEVLAKPQMRG) lie on the Mitochondrial matrix side of the membrane. A helical membrane pass occupies residues 14 to 54 (LLARRLRIHMVGAFLISLGVAALYKFGVAEPRKKAYADFYK). Over 55-75 (NYSPEKDFEEMKKAGVFRSIK) the chain is Mitochondrial intermembrane.

This sequence belongs to the cytochrome c oxidase subunit 6c family. As to quaternary structure, component of the cytochrome c oxidase (complex IV, CIV), a multisubunit enzyme composed of 14 subunits. The complex is composed of a catalytic core of 3 subunits MT-CO1, MT-CO2 and MT-CO3, encoded in the mitochondrial DNA, and 11 supernumerary subunits COX4I, COX5A, COX5B, COX6A, COX6B, COX6C, COX7A, COX7B, COX7C, COX8 and NDUFA4, which are encoded in the nuclear genome. The complex exists as a monomer or a dimer and forms supercomplexes (SCs) in the inner mitochondrial membrane with NADH-ubiquinone oxidoreductase (complex I, CI) and ubiquinol-cytochrome c oxidoreductase (cytochrome b-c1 complex, complex III, CIII), resulting in different assemblies (supercomplex SCI(1)III(2)IV(1) and megacomplex MCI(2)III(2)IV(2)).

The protein localises to the mitochondrion inner membrane. The protein operates within energy metabolism; oxidative phosphorylation. Component of the cytochrome c oxidase, the last enzyme in the mitochondrial electron transport chain which drives oxidative phosphorylation. The respiratory chain contains 3 multisubunit complexes succinate dehydrogenase (complex II, CII), ubiquinol-cytochrome c oxidoreductase (cytochrome b-c1 complex, complex III, CIII) and cytochrome c oxidase (complex IV, CIV), that cooperate to transfer electrons derived from NADH and succinate to molecular oxygen, creating an electrochemical gradient over the inner membrane that drives transmembrane transport and the ATP synthase. Cytochrome c oxidase is the component of the respiratory chain that catalyzes the reduction of oxygen to water. Electrons originating from reduced cytochrome c in the intermembrane space (IMS) are transferred via the dinuclear copper A center (CU(A)) of subunit 2 and heme A of subunit 1 to the active site in subunit 1, a binuclear center (BNC) formed by heme A3 and copper B (CU(B)). The BNC reduces molecular oxygen to 2 water molecules using 4 electrons from cytochrome c in the IMS and 4 protons from the mitochondrial matrix. The sequence is that of Cytochrome c oxidase subunit 6C (COX6C) from Saimiri sciureus (Common squirrel monkey).